We begin with the raw amino-acid sequence, 300 residues long: Protein orai (300 aa).

Residues 1 to 128 lie on the Cytoplasmic side of the membrane; sequence MPRSHDPSRV…SKAQLKASSR (128 aa). Positions 58–82 are disordered; sequence QPPSSGGGSRNVGGGDGAAGNSKNG. The segment covering 62-75 has biased composition (gly residues); it reads SGGGSRNVGGGDGA. Residues 129 to 146 traverse the membrane as a helical segment; the sequence is TSALLAGFAMVCLVELQY. Residues 147–153 are Extracellular-facing; sequence DDSTSKP. The chain crosses the membrane as a helical span at residues 154-174; that stretch reads LLIVLGVVTSLLVSVHLLALM. Residues 175–205 lie on the Cytoplasmic side of the membrane; the sequence is MSTCILPYMEATGCTQDSPHLKLKFYIDLSW. The helical transmembrane segment at 206–226 threads the bilayer; it reads LFSTCIGLLLFLVEIGVIFYV. Over 227–237 the chain is Extracellular; sequence KFTAVGYPTAG. Residues 238-258 form a helical membrane-spanning segment; the sequence is YITTAMLIPVGIVFVLFSYLI. Over 259–300 the chain is Cytoplasmic; it reads HKNRVSHSLGRFKDKVDTMKQFLDVEANLQKSTIAPSTIRDI.

Belongs to the Orai family.

It is found in the membrane. Functionally, ca(2+) release-activated Ca(2+)-like (CRAC-like) channel subunit which mediates Ca(2+) influx and increase in Ca(2+)-selective current by synergy with the Ca(2+) sensor, stim-1. Required for Ca(2+) and IP3-dependent contractile activity of sheath cells and the spermatheca. Affects brood size and somatic cell function. The sequence is that of Protein orai (orai-1) from Caenorhabditis briggsae.